Reading from the N-terminus, the 569-residue chain is Urease subunit beta (569 aa).

Positions Gly-131–Phe-569 constitute a Urease domain. 3 residues coordinate Ni(2+): His-136, His-138, and Lys-219. Lys-219 is modified (N6-carboxylysine). His-221 provides a ligand contact to substrate. 2 residues coordinate Ni(2+): His-248 and His-274. The Proton donor role is filled by His-322. Asp-362 contacts Ni(2+).

The protein belongs to the metallo-dependent hydrolases superfamily. Urease alpha subunit family. Heterohexamer of 3 UreA (alpha) and 3 UreB (beta) subunits. Requires Ni cation as cofactor. Carboxylation allows a single lysine to coordinate two nickel ions.

It localises to the cytoplasm. The enzyme catalyses urea + 2 H2O + H(+) = hydrogencarbonate + 2 NH4(+). It participates in nitrogen metabolism; urea degradation; CO(2) and NH(3) from urea (urease route): step 1/1. In Helicobacter felis (strain ATCC 49179 / CCUG 28539 / NCTC 12436 / CS1), this protein is Urease subunit beta.